The sequence spans 402 residues: Protein lag-2 (402 aa).

The N-terminal stretch at 1–15 (MIAYFLLLLTCLPVL) is a signal peptide. At 16–279 (QARVEVHQEF…TTTTPTTVEI (264 aa)) the chain is on the extracellular side. 2 N-linked (GlcNAc...) asparagine glycosylation sites follow: asparagine 72 and asparagine 105. One can recognise a DSL domain in the interval 122–166 (VTCARNYFGNRCENFCDAHLAKAARKRCDAMGRLRCDIGWMGPHC). Disulfide bonds link cysteine 124/cysteine 133, cysteine 137/cysteine 149, cysteine 157/cysteine 166, cysteine 175/cysteine 183, cysteine 177/cysteine 204, cysteine 206/cysteine 215, cysteine 233/cysteine 245, cysteine 239/cysteine 254, and cysteine 256/cysteine 265. 2 EGF-like domains span residues 171-216 (DPRK…TRCE) and 229-266 (RPDACSVKDACLNGAKCFPNGPKVFCSCAVGFIGEFCE). Asparagine 194 is a glycosylation site (N-linked (GlcNAc...) asparagine). The chain crosses the membrane as a helical span at residues 280–306 (TVSTSGYSSAVYITVALFVIFSIIIGC). At 307-402 (FKYKFKPMRQ…PPSIPACHYV (96 aa)) the chain is on the cytoplasmic side.

In terms of assembly, may interact with lin-12 / Notch receptor. In terms of tissue distribution, expressed in the gonad distal tip cell (DTC) of hermaphrodites.

It is found in the cell membrane. Functionally, probable ligand for lin-12/Notch and glp-1/Notch receptors and involved in the mediation of Notch signaling. Involved in the lin-12/Notch pathway signaling of cell fate in vulval precursor cells (VPCs) and in the postembryonic mesodermal lineage (M lineage), acting redundantly with dsl-1 and apx-1. Functions in uterine cells to promote basement membrane mobility during tissue remodeling. Required for oocyte growth control, acting redundantly with apx-1, perhaps signaling via the glp-1/Notch pathway. Plays a role in Notch-dependent induction of left-right asymmetry in interneurons and motoneurons. Involved in maintaining the developmentally arrested larval state known as dauer, probably signaling in the glp-1/Notch pathway. Required for normal sleep bout quantity and arousal thresholds during the transition from the last larval stage to adulthood in well-fed animals. This Caenorhabditis elegans protein is Protein lag-2.